Reading from the N-terminus, the 217-residue chain is NAD(P)H-quinone oxidoreductase subunit M, chloroplastic (217 aa).

The transit peptide at 1-21 (MVAAFSYTACTKLSLLHPSMV) directs the protein to the chloroplast. Residues 48 to 67 (ETETLKEEQSTEKMKKQPTP) are disordered. Over residues 50–62 (ETLKEEQSTEKMK) the composition is skewed to basic and acidic residues.

The protein belongs to the NDH complex subunit M family. In terms of assembly, part of the chloroplast NDH complex, composed of a mixture of chloroplast and nucleus encoded subunits. Component of the NDH subcomplex A, at least composed of ndhH, ndhI, ndhJ, ndhK, ndhL, ndhM, ndhN and ndhO.

It is found in the plastid. The protein resides in the chloroplast thylakoid membrane. It catalyses the reaction a plastoquinone + NADH + (n+1) H(+)(in) = a plastoquinol + NAD(+) + n H(+)(out). The catalysed reaction is a plastoquinone + NADPH + (n+1) H(+)(in) = a plastoquinol + NADP(+) + n H(+)(out). Functionally, NDH shuttles electrons from NAD(P)H:plastoquinone, via FMN and iron-sulfur (Fe-S) centers, to quinones in the photosynthetic chain and possibly in a chloroplast respiratory chain. The immediate electron acceptor for the enzyme in this species is believed to be plastoquinone. Couples the redox reaction to proton translocation, and thus conserves the redox energy in a proton gradient. The polypeptide is NAD(P)H-quinone oxidoreductase subunit M, chloroplastic (Arabidopsis thaliana (Mouse-ear cress)).